The following is a 286-amino-acid chain: Transcription factor egl-46 (286 aa).

A C2H2-type 1; atypical zinc finger spans residues 180-200; that stretch reads CICRLCKVKYEDVFKLAQHKC. 2 C2H2-type zinc fingers span residues 208–230 and 248–271; these read YKCP…RRWH and VSCS…STCQ.

This sequence belongs to the INSM1 family. Interacts (via C-terminus) with egl-44 (via N-terminus); the interaction is direct; the interaction may regulate transcription. In terms of tissue distribution, expressed in touch cells, HSN cells, ventral cord motor neurons and ciliated ray neurons.

The protein resides in the nucleus. Transcription factor. Represses expression of genes involved in differentiation of touch receptor neurons (TRN), probably acting as a heterodimer with egl-44, perhaps by occupying similar cis-regulatory elements as an unc-86/mec-3 heterodimer. Plays a role in cell fate specification of neurons, including the hook neuron HOB, the gas-sensing neuron BAG and touch receptor neurons. Plays a role in neuron differentiation by repressing the expression of zag-1 in FLP neurons, probably acting as a heterodimer with egl-44; because zag-1 represses expression of egl-46 and egl-44, together these proteins form a bistable, negative-feedback loop that regulates the choice between neuronal fates. Acts downstream of egl-44 to prevent touch cell differentiation in FLP neurons. Involved in male mating behavior, acting in concert with egl-44, via modulation of expression of polycystins lov-1 and pkd-2, homeodomain protein ceh-26, and neuropeptide-like protein nlp-8. Modulates the expression of a subset of terminal differentiation genes involved in O(2)- and CO(2)-sensing, acting in parallel to ets-5 and egl-13. May act upstream of RFX transcription factor daf-19 to regulate gene expression specifically in the HOB neuron. Plays a role in specifying commissural dendrites of the PVD nociceptive neurons, acting in concert with egl-44. In association with egl-44, regulates cell cycle exit in the neuronal Q cell lineage. The sequence is that of Transcription factor egl-46 from Caenorhabditis elegans.